Consider the following 526-residue polypeptide: Ubiquitin carboxyl-terminal hydrolase 17-like protein A (526 aa).

Residues 1 to 21 (MVVALSFPEADPALSSPDAPE) form a disordered region. One can recognise a USP domain in the interval 51–348 (CGLQNTGNSC…NAYVLFYVQQ (298 aa)). Cys60 functions as the Nucleophile in the catalytic mechanism. Residue His307 is the Proton acceptor of the active site. The span at 374 to 385 (KKSRRKKHKKKS) shows a compositional bias: basic residues. Disordered stretches follow at residues 374–394 (KKSR…LGEP) and 465–494 (RSTA…SQGP). Residues 473 to 486 (DSPDKENQPLHNAD) are compositionally biased toward basic and acidic residues.

This sequence belongs to the peptidase C19 family. Post-translationally, polyubiquitinated; ubiquitination leads to its subsequent degradation. As to expression, expressed in hematopoietic progenitor cell lines Ba/F3 and FDCP1. Not detected in brain, lung, liver, kidney, thymus, spleen and bone marrow.

It carries out the reaction Thiol-dependent hydrolysis of ester, thioester, amide, peptide and isopeptide bonds formed by the C-terminal Gly of ubiquitin (a 76-residue protein attached to proteins as an intracellular targeting signal).. Its function is as follows. Deubiquitinating enzyme that removes conjugated ubiquitin from specific proteins to regulate different cellular processes. Has deubiquitinating enzyme activity for DNAH5, suggesting a role in the regulation of DNAH5 degradation by the ubiquitin-proteasome pathway. Has growth-suppressing activity; induces arrest in G1 phase upon controlled expression. This is Ubiquitin carboxyl-terminal hydrolase 17-like protein A (Usp17la) from Mus musculus (Mouse).